Here is a 329-residue protein sequence, read N- to C-terminus: Phosphate acyltransferase (329 aa).

Belongs to the PlsX family. As to quaternary structure, homodimer. Probably interacts with PlsY.

Its subcellular location is the cytoplasm. The catalysed reaction is a fatty acyl-[ACP] + phosphate = an acyl phosphate + holo-[ACP]. Its pathway is lipid metabolism; phospholipid metabolism. Catalyzes the reversible formation of acyl-phosphate (acyl-PO(4)) from acyl-[acyl-carrier-protein] (acyl-ACP). This enzyme utilizes acyl-ACP as fatty acyl donor, but not acyl-CoA. This is Phosphate acyltransferase from Sulfurovum sp. (strain NBC37-1).